The sequence spans 272 residues: Ribosomal RNA small subunit methyltransferase A (272 aa).

The S-adenosyl-L-methionine site is built by N18, L20, G45, E66, D91, and N113.

Belongs to the class I-like SAM-binding methyltransferase superfamily. rRNA adenine N(6)-methyltransferase family. RsmA subfamily.

It is found in the cytoplasm. It carries out the reaction adenosine(1518)/adenosine(1519) in 16S rRNA + 4 S-adenosyl-L-methionine = N(6)-dimethyladenosine(1518)/N(6)-dimethyladenosine(1519) in 16S rRNA + 4 S-adenosyl-L-homocysteine + 4 H(+). In terms of biological role, specifically dimethylates two adjacent adenosines (A1518 and A1519) in the loop of a conserved hairpin near the 3'-end of 16S rRNA in the 30S particle. May play a critical role in biogenesis of 30S subunits. The polypeptide is Ribosomal RNA small subunit methyltransferase A (Yersinia pseudotuberculosis serotype O:1b (strain IP 31758)).